The primary structure comprises 185 residues: Ribosome-recycling factor (185 aa).

Belongs to the RRF family.

The protein localises to the cytoplasm. Its function is as follows. Responsible for the release of ribosomes from messenger RNA at the termination of protein biosynthesis. May increase the efficiency of translation by recycling ribosomes from one round of translation to another. This Streptococcus sanguinis (strain SK36) protein is Ribosome-recycling factor.